The following is a 506-amino-acid chain: ATP synthase subunit alpha (506 aa).

171 to 178 (GDRQTGKT) is an ATP binding site.

It belongs to the ATPase alpha/beta chains family. In terms of assembly, F-type ATPases have 2 components, CF(1) - the catalytic core - and CF(0) - the membrane proton channel. CF(1) has five subunits: alpha(3), beta(3), gamma(1), delta(1), epsilon(1). CF(0) has four main subunits: a, b, b' and c.

The protein resides in the cellular thylakoid membrane. It catalyses the reaction ATP + H2O + 4 H(+)(in) = ADP + phosphate + 5 H(+)(out). Produces ATP from ADP in the presence of a proton gradient across the membrane. The alpha chain is a regulatory subunit. The sequence is that of ATP synthase subunit alpha from Nostoc punctiforme (strain ATCC 29133 / PCC 73102).